Consider the following 301-residue polypeptide: Protein phosphatase 1 regulatory subunit 3B (301 aa).

A PP1-binding motif motif is present at residues 79–82 (RVSF). The CBM21 domain maps to 142–250 (RNRLQAESVC…SNKGLNYRIV (109 aa)).

In terms of assembly, interacts with glycogen, PPP1CC catalytic subunit of PP1 and PYGL. Associates with glycogen particles. Forms complexes with debranching enzyme, glycogen phosphorylase, glycogen synthase and phosphorylase kinase which is necessary for its regulation of PP1 activity.

In terms of biological role, acts as a glycogen-targeting subunit for phosphatase PP1. Facilitates interaction of the PP1 with enzymes of the glycogen metabolism and regulates its activity. Suppresses the rate at which PP1 dephosphorylates (inactivates) glycogen phosphorylase and enhances the rate at which it activates glycogen synthase and therefore limits glycogen breakdown. In Xenopus tropicalis (Western clawed frog), this protein is Protein phosphatase 1 regulatory subunit 3B (ppp1r3b).